Consider the following 151-residue polypeptide: Transcription antitermination protein NusB (151 aa).

It belongs to the NusB family.

In terms of biological role, involved in transcription antitermination. Required for transcription of ribosomal RNA (rRNA) genes. Binds specifically to the boxA antiterminator sequence of the ribosomal RNA (rrn) operons. The sequence is that of Transcription antitermination protein NusB from Thermus thermophilus (strain ATCC BAA-163 / DSM 7039 / HB27).